The chain runs to 487 residues: Citrate/succinate antiporter (487 aa).

Transmembrane regions (helical) follow at residues 11-31, 60-80, 95-115, 138-158, 190-210, 214-234, 237-257, 288-308, 309-329, 345-365, 379-399, 401-421, 424-444, and 463-483; these read LLAP…DGMP, FIAV…AKEL, GLAG…IFAL, TLTL…FTPS, IGGY…SMFV, APNV…ISWL, FLCF…LSYV, WTLI…SEVI, NATA…VVPW, LATL…DWFA, ATVI…ASLS, HTAT…GVPM, LCIL…YATG, and LGAI…WPIL.

The protein belongs to the SLC13A/DASS transporter (TC 2.A.47) family. DIT1 subfamily.

The protein localises to the cell inner membrane. In terms of biological role, responsible for the uptake of citrate in exchange to the efflux of succinate. Has a relatively broad specificity for C(4)-dicarboxylates and tricarboxylates. This Escherichia coli O157:H7 protein is Citrate/succinate antiporter (citT).